A 263-amino-acid polypeptide reads, in one-letter code: uncharacterized protein (263 aa).

Residues 22–44 form a disordered region; sequence IDGSDDQSDRTRSSSGDSTSNSL. A compositionally biased stretch (low complexity) spans 34 to 43; it reads SSSGDSTSNS.

The protein resides in the mitochondrion. This is an uncharacterized protein from Schizosaccharomyces pombe (strain 972 / ATCC 24843) (Fission yeast).